The primary structure comprises 228 residues: Ephrin-A5 (228 aa).

A signal peptide spans 1-20 (MPHVEMLLLAVAALWVCVRG). The Ephrin RBD domain occupies 29–162 (ADRYAVYWNS…KLKVFVRPAN (134 aa)). Asn37 carries N-linked (GlcNAc...) asparagine glycosylation. 2 disulfides stabilise this stretch: Cys62–Cys102 and Cys90–Cys151. The GPI-anchor amidated asparagine moiety is linked to residue Asn203. The propeptide at 204–228 (AAQTPRIPIRLLATLLFLLAMLLIL) is removed in mature form.

It belongs to the ephrin family. As to expression, expressed in a graded fashion across the tectum being more strongly expressed towards the posterior pole.

The protein resides in the cell membrane. Its function is as follows. Cell surface GPI-bound ligand for Eph receptors, a family of receptor tyrosine kinases which are crucial for migration, repulsion and adhesion during neuronal, vascular and epithelial development. Binds promiscuously Eph receptors residing on adjacent cells, leading to contact-dependent bidirectional signaling into neighboring cells. Induces compartmentalized signaling within a caveolae-like membrane microdomain when bound to the extracellular domain of its cognate receptor. This signaling event requires the activity of the Fyn tyrosine kinase. Activates the EPHA3 receptor to regulate cell-cell adhesion and cytoskeletal organization. With the receptor EPHA2 may regulate lens fiber cells shape and interactions and be important for lens transparency maintenance. May function actively to stimulate axon fasciculation. Induces growth cone collapse and repulsion of retinal ganglion cell axons. This is Ephrin-A5 (EFNA5) from Gallus gallus (Chicken).